A 394-amino-acid chain; its full sequence is Stabilizer of axonemal microtubules 2 (394 aa).

Mn regions lie at residues 110 to 122 (STTF…PQEI), 144 to 158 (DTSH…QLEV), 244 to 256 (NSTS…PYQA), 278 to 292 (KSTT…EICR), 312 to 324 (LSTF…PHEL), and 346 to 360 (VTMY…KQEI).

Belongs to the FAM154 family.

In Mus musculus (Mouse), this protein is Stabilizer of axonemal microtubules 2 (Saxo2).